The sequence spans 507 residues: tRNA-2-methylthio-N(6)-dimethylallyladenosine synthase (507 aa).

In terms of domain architecture, MTTase N-terminal spans 13-129; sequence RTYQVRTYGC…LPALLERARH (117 aa). Positions 22, 58, 92, 166, 170, and 173 each coordinate [4Fe-4S] cluster. A Radical SAM core domain is found at 152 to 388; the sequence is RESAYAAWVS…IALQESVTLE (237 aa). Residues 391–462 enclose the TRAM domain; the sequence is QKQIGRMIEV…PHHLIADDGV (72 aa). The span at 459–478 shows a compositional bias: basic and acidic residues; sequence DDGVRSHRRTRAGDAHEAGK. The segment at 459-492 is disordered; sequence DDGVRSHRRTRAGDAHEAGKKPSTPGIGLGMPAI.

The protein belongs to the methylthiotransferase family. MiaB subfamily. As to quaternary structure, monomer. It depends on [4Fe-4S] cluster as a cofactor.

Its subcellular location is the cytoplasm. The catalysed reaction is N(6)-dimethylallyladenosine(37) in tRNA + (sulfur carrier)-SH + AH2 + 2 S-adenosyl-L-methionine = 2-methylsulfanyl-N(6)-dimethylallyladenosine(37) in tRNA + (sulfur carrier)-H + 5'-deoxyadenosine + L-methionine + A + S-adenosyl-L-homocysteine + 2 H(+). Functionally, catalyzes the methylthiolation of N6-(dimethylallyl)adenosine (i(6)A), leading to the formation of 2-methylthio-N6-(dimethylallyl)adenosine (ms(2)i(6)A) at position 37 in tRNAs that read codons beginning with uridine. This chain is tRNA-2-methylthio-N(6)-dimethylallyladenosine synthase, found in Mycobacteroides abscessus (strain ATCC 19977 / DSM 44196 / CCUG 20993 / CIP 104536 / JCM 13569 / NCTC 13031 / TMC 1543 / L948) (Mycobacterium abscessus).